Reading from the N-terminus, the 774-residue chain is MTMAAKTDREALQAALPPLSGSLSIPGLSAPVRVQRDGWGIPHIKASGEADAYRALGFVHAQDRLFQMELTRRKALGRAAEWLGAEAAEADILVRRLGMEKVCRRDFEALGAEAKDMLRAYVAGVNAFLASGAPLPIEYGLLGAEPEPWEPWHSIAVMRRLGLLMGSVWFKLWRMLALPVVGAANALKLRYDDGGQDLLCIPPGVEAERLEADLAALRPAVDALLKAMGGDASDAAGGGSNNWAVAPGRTATGRPILAGDPHRVFEIPGMYAQHHLACDRFDMIGLTVPGVPGFPHFAHNGKVAYCVTHAFMDIHDLYLEQFAEDGRTARFGNEFEPVAWRRDRIAVRGGADREFDIVETRHGPVIAGDPLEGAALTLRSVQFAETDLSFDCLTRMPGASTVAQLYDATRGWGLIDHNLVAGDVAGSIGHLVRARVPSRPRENGWLPVPGWSGEHEWRGWIPHEAMPRVIDPPGGLIVTANNRVVADDHPDYLCTDCHPPYRAERIMERLVASPAFAVDDAAAIHADTLSPHVGLLRARLEALGIQGSLPAEELRQTLIAWDGRMDAGSQAASAYNAFRRALTRLVTARSGLEQAIAHPFAAVPPGVSPQGQVWWAVPTLLRNDDAGMLKGWSWDEALSEALSVATQNLTGRGWGEEHRPRFTHPLSAQFPAWAALLNPVSRPIGGDGDTVLANGLVPSAGPEATYGALSRYVFDVGNWDNSRWVVFHGASGHPASPHYADQNAPWSDCAMVPMLYSWDRIAAEAVTSQELVPA.

Ser-240 (nucleophile) is an active-site residue.

This sequence belongs to the peptidase S45 family. In terms of assembly, heterodimer of a small subunit and a large subunit processed from the same precursor.

The catalysed reaction is a penicillin + H2O = 6-aminopenicillanate + a carboxylate. This chain is Penicillin acylase 2 proenzyme (acyII), found in Pseudomonas sp. (strain SE83).